A 126-amino-acid polypeptide reads, in one-letter code: Nuclear transport factor 2B (126 aa).

The residue at position 2 (S2) is an N-acetylserine. An NTF2 domain is found at 9-123; it reads VSKAFVEHYY…FYVFNDIFRL (115 aa).

Interacts with RAN1. In terms of tissue distribution, expressed in roots, stems, leaves and flowers, and, at low levels, in siliques.

The protein resides in the cytoplasm. It is found in the nucleus. The protein localises to the nucleus envelope. Functionally, facilitates protein transport into the nucleus. Interacts with various nucleoporins and with Ran-GDP. Could be part of a multicomponent system of cytosolic factors that assemble at the pore complex during nuclear import. The chain is Nuclear transport factor 2B from Arabidopsis thaliana (Mouse-ear cress).